Reading from the N-terminus, the 219-residue chain is Probable GTP-binding protein EngB (219 aa).

Positions 31-205 constitute an EngB-type G domain; the sequence is VGVEIAFAGR…LSILNEWCHP (175 aa). GTP contacts are provided by residues 39–46, 66–70, 84–87, 151–154, and 184–186; these read GRSNAGKS, GRTQL, DLPG, TKSD, and FSA. Mg(2+)-binding residues include Ser46 and Thr68.

It belongs to the TRAFAC class TrmE-Era-EngA-EngB-Septin-like GTPase superfamily. EngB GTPase family. It depends on Mg(2+) as a cofactor.

Functionally, necessary for normal cell division and for the maintenance of normal septation. This chain is Probable GTP-binding protein EngB, found in Shewanella sp. (strain W3-18-1).